The following is a 542-amino-acid chain: MIFKNTRRSYQIIATFLRYGIDEIIPDIPFTYSARLTRKAFFWLQNEHKDQPFGVRLRLALQELGPVWIKLGQMLATRRDLFEPALADQLALLQDSVAPFDGKLARKIIEQALGNTLETWFDDFDEQALASASIAQVHTATFNKNQPLAGQNVVLKVIRPDIEHIIKADIALMYQLAKLIPYLSDDAKRLRATEVVREYEKTLLDELDLTREMANAIRLRNNFENSEMLYVPAMYPDFCHKNVIVMERIYGIPVSDIATLTENGTNMKLLAERGVQVFFTQVFRDSFFHADMHAGNIFVNPNHPEDPQYIGIDCGIVGTLNQNDKRYLAESFVAFFNRDYRRVALMHIESGWTPADTDVDAFEEAFRTVCEPIFAKPLAEISFGQVLLNLFNVARQFNMEVQPQLVLLQKTLLYIEGLGRQVYPALDLWQTAKPFLQKWLDQQVGFKAILRDLKQQAPQFREHFAQFPEAVFNALQQQKHINYRLAELNKTLQSQADNKTYNVKMIIMGSIILSLLWQFNSLPLWLSLPILTMLCLALCRRK.

The Protein kinase domain occupies 123–505 (DFDEQALASA…ADNKTYNVKM (383 aa)). Residues 129 to 137 (LASASIAQV) and Lys-156 contribute to the ATP site. Asp-291 acts as the Proton acceptor in catalysis. Residues 506–526 (IIMGSIILSLLWQFNSLPLWL) traverse the membrane as a helical segment.

Belongs to the ABC1 family. UbiB subfamily.

Its subcellular location is the cell inner membrane. It participates in cofactor biosynthesis; ubiquinone biosynthesis [regulation]. Is probably a protein kinase regulator of UbiI activity which is involved in aerobic coenzyme Q (ubiquinone) biosynthesis. The sequence is that of Probable protein kinase UbiB from Haemophilus ducreyi (strain 35000HP / ATCC 700724).